The chain runs to 99 residues: Protein IDA-LIKE 3 (99 aa).

The N-terminal stretch at 1–32 (MSSRSHRSRKYQLTRTIPILVLLLVLLSCCNG) is a signal peptide. Residues 36 to 45 (TNVFNTSSPP) show a composition bias toward polar residues. Disordered stretches follow at residues 36 to 58 (TNVF…HDHV) and 73 to 99 (SLPR…STKT). The span at 46–58 (KQKDVVSPPHDHV) shows a compositional bias: basic and acidic residues.

As to expression, expressed in flowers and seedlings. Detected at the base of pedicel, in the floral abscission zone and in vascular tissues.

The protein resides in the secreted. The protein localises to the extracellular space. In terms of biological role, may be involved in floral abscission. This Arabidopsis thaliana (Mouse-ear cress) protein is Protein IDA-LIKE 3 (IDL3).